The sequence spans 876 residues: Alanine--tRNA ligase (876 aa).

The Zn(2+) site is built by histidine 562, histidine 566, cysteine 666, and histidine 670.

It belongs to the class-II aminoacyl-tRNA synthetase family. Zn(2+) is required as a cofactor.

It is found in the cytoplasm. It carries out the reaction tRNA(Ala) + L-alanine + ATP = L-alanyl-tRNA(Ala) + AMP + diphosphate. Catalyzes the attachment of alanine to tRNA(Ala) in a two-step reaction: alanine is first activated by ATP to form Ala-AMP and then transferred to the acceptor end of tRNA(Ala). Also edits incorrectly charged Ser-tRNA(Ala) and Gly-tRNA(Ala) via its editing domain. The polypeptide is Alanine--tRNA ligase (Marinobacter nauticus (strain ATCC 700491 / DSM 11845 / VT8) (Marinobacter aquaeolei)).